The primary structure comprises 428 residues: UPF0229 protein YeaH (428 aa).

A compositionally biased stretch (basic and acidic residues) spans 78-90; sequence GNDHFIQNDRIER. The segment at 78 to 111 is disordered; that stretch reads GNDHFIQNDRIERPQGGGGGGSGSGQGQASQDGE. Gly residues predominate over residues 92 to 103; it reads QGGGGGGSGSGQ.

The protein belongs to the UPF0229 family.

The sequence is that of UPF0229 protein YeaH from Salmonella enteritidis PT4 (strain P125109).